A 167-amino-acid polypeptide reads, in one-letter code: Transmembrane protein 229B (167 aa).

Topologically, residues 1–14 are cytoplasmic; the sequence is MASAEPLTALSRWY. Residues 15–35 traverse the membrane as a helical segment; that stretch reads LYAIHGYFCEVMFTAAWEFVV. At 36–40 the chain is on the extracellular side; it reads NFNWK. A helical membrane pass occupies residues 41–61; it reads FPGVTSVWALFIYGTSILIVE. Topologically, residues 62-73 are cytoplasmic; the sequence is RMYLRLRGRCPL. Residues 74–94 traverse the membrane as a helical segment; sequence LVRCVIYTLWTYLWEFTTGFI. The Extracellular portion of the chain corresponds to 95–109; sequence LRQFNACPWDYSQFD. Residues 110-130 traverse the membrane as a helical segment; sequence FDFMGLITLEYAVPWFCGALI. Topologically, residues 131 to 167 are cytoplasmic; the sequence is MEQFIIRNTLRLRFDKDAEPGEPASPPALANGHVKTD. Residues 148-167 are disordered; the sequence is AEPGEPASPPALANGHVKTD.

It belongs to the TMEM229 family.

The protein resides in the membrane. The polypeptide is Transmembrane protein 229B (TMEM229B) (Mus musculus (Mouse)).